The sequence spans 196 residues: MIGIYIAALVLGYLFGSIPFGLILTRIAGTEDLRSIGSGNIGATNVLRTGRKGLAAATLLLDALKGTAAVLIAAGFGGAEAAMLAALGAFLGHLFPVWLKFKGGKGVAVYIGVLLGLFWPAALVFCVLWLATAYTTRYSSLSALVAAFITPIFLWWFGHPTMASLFAVLTLLLFWMHRDNIKRLQSGTESRIGEKK.

4 helical membrane passes run 4–24, 70–90, 111–131, and 152–172; these read IYIAALVLGYLFGSIPFGLIL, VLIAAGFGGAEAAMLAALGAF, IGVLLGLFWPAALVFCVLWLA, and IFLWWFGHPTMASLFAVLTLL.

The protein belongs to the PlsY family. As to quaternary structure, probably interacts with PlsX.

Its subcellular location is the cell inner membrane. The catalysed reaction is an acyl phosphate + sn-glycerol 3-phosphate = a 1-acyl-sn-glycero-3-phosphate + phosphate. Its pathway is lipid metabolism; phospholipid metabolism. In terms of biological role, catalyzes the transfer of an acyl group from acyl-phosphate (acyl-PO(4)) to glycerol-3-phosphate (G3P) to form lysophosphatidic acid (LPA). This enzyme utilizes acyl-phosphate as fatty acyl donor, but not acyl-CoA or acyl-ACP. The sequence is that of Glycerol-3-phosphate acyltransferase from Rhodopseudomonas palustris (strain BisB5).